The sequence spans 746 residues: Exostosin-1 (746 aa).

The Cytoplasmic segment spans residues 1–5; the sequence is MQAKK. A helical; Signal-anchor for type II membrane protein membrane pass occupies residues 6 to 26; the sequence is RYFILLSAGSCLALLFYFGGV. The Lumenal segment spans residues 27 to 746; the sequence is QFRASRSHSR…RKKYRDIERL (720 aa). N-linked (GlcNAc...) asparagine glycosylation is present at N89. 2 disulfides stabilise this stretch: C98–C103 and C109–C152. Positions 166 and 203 each coordinate a protein. Residues K267, K269, Y271, and R280 each coordinate UDP. C298 and C312 form a disulfide bridge. H300 is a binding site for a protein. Y319 and Y324 together coordinate UDP. N330 carries an N-linked (GlcNAc...) asparagine glycan. 2 cysteine pairs are disulfide-bonded: C334-C355 and C652-C704. 2 residues coordinate UDP: R346 and E349.

Belongs to the glycosyltransferase 47 family. Part of the heparan sulfate polymerase, a dimeric complex composed of EXT1 and EXT2. Could also form homooligomeric complexes. Interacts with NDST1. N-glycosylated.

It localises to the golgi apparatus membrane. The protein resides in the golgi apparatus. It is found in the cis-Golgi network membrane. Its subcellular location is the endoplasmic reticulum membrane. The enzyme catalyses 3-O-{alpha-D-GlcNAc-[(1-&gt;4)-beta-D-GlcA-(1-&gt;4)-alpha-D-GlcNAc](n)-(1-&gt;4)-beta-D-GlcA-(1-&gt;3)-beta-D-Gal-(1-&gt;3)-beta-D-Gal-(1-&gt;4)-beta-D-Xyl}-L-seryl-[protein] + UDP-alpha-D-glucuronate = 3-O-{[(1-&gt;4)-beta-D-GlcA-(1-&gt;4)-alpha-D-GlcNAc](n+1)-(1-&gt;4)-beta-D-GlcA-(1-&gt;3)-beta-D-Gal-(1-&gt;3)-beta-D-Gal-(1-&gt;4)-beta-D-Xyl}-L-seryl-[protein] + UDP + H(+). Its pathway is protein modification; protein glycosylation. Its function is as follows. Glycosyltransferase forming with EXT2 the heterodimeric heparan sulfate polymerase which catalyzes the elongation of the heparan sulfate glycan backbone. Glycan backbone extension consists in the alternating transfer of (1-&gt;4)-beta-D-GlcA and (1-&gt;4)-alpha-D-GlcNAc residues from their respective UDP-sugar donors. Both EXT1 and EXT2 are required for the full activity of the polymerase since EXT1 bears the N-acetylglucosaminyl-proteoglycan 4-beta-glucuronosyltransferase activity within the complex while EXT2 carries the glucuronosyl-N-acetylglucosaminyl-proteoglycan 4-alpha-N-acetylglucosaminyltransferase activity. Heparan sulfate proteoglycans are ubiquitous components of the extracellular matrix and play an important role in tissue homeostasis and signaling. This Cricetulus griseus (Chinese hamster) protein is Exostosin-1.